A 533-amino-acid polypeptide reads, in one-letter code: Beta-glucosidase 22 (533 aa).

The signal sequence occupies residues 1–24; the sequence is MAVSSSTSTCSSFSLLLLLLLLAA. Asn-41 is a glycosylation site (N-linked (GlcNAc...) asparagine). A beta-D-glucoside is bound by residues Gln-61, His-161, and 206-207; that span reads DE. Glu-207 (proton donor) is an active-site residue. Cys-226 and Cys-234 are joined by a disulfide. 2 N-linked (GlcNAc...) asparagine glycosylation sites follow: Asn-233 and Asn-238. The a beta-D-glucoside site is built by Tyr-350 and Glu-421. Glu-421 functions as the Nucleophile in the catalytic mechanism. N-linked (GlcNAc...) asparagine glycosylation is present at Asn-435. Residues Trp-466 and Phe-482 each coordinate a beta-D-glucoside.

It belongs to the glycosyl hydrolase 1 family.

It carries out the reaction Hydrolysis of terminal, non-reducing beta-D-glucosyl residues with release of beta-D-glucose.. The sequence is that of Beta-glucosidase 22 (BGLU22) from Oryza sativa subsp. japonica (Rice).